The primary structure comprises 287 residues: Protease HtpX (287 aa).

The next 2 helical transmembrane spans lie at 4 to 24 and 33 to 53; these read IFLL…VMSI and GGLL…SLAI. H139 lines the Zn(2+) pocket. The active site involves E140. A Zn(2+)-binding site is contributed by H143. 2 helical membrane-spanning segments follow: residues 154–174 and 195–215; these read LIQG…AGII and AVVF…VAYF. Position 220 (E220) interacts with Zn(2+).

Belongs to the peptidase M48B family. Zn(2+) is required as a cofactor.

The protein resides in the cell inner membrane. This chain is Protease HtpX, found in Shewanella baltica (strain OS223).